A 202-amino-acid polypeptide reads, in one-letter code: Imidazoleglycerol-phosphate dehydratase (202 aa).

This sequence belongs to the imidazoleglycerol-phosphate dehydratase family.

The protein localises to the cytoplasm. The enzyme catalyses D-erythro-1-(imidazol-4-yl)glycerol 3-phosphate = 3-(imidazol-4-yl)-2-oxopropyl phosphate + H2O. It functions in the pathway amino-acid biosynthesis; L-histidine biosynthesis; L-histidine from 5-phospho-alpha-D-ribose 1-diphosphate: step 6/9. This chain is Imidazoleglycerol-phosphate dehydratase, found in Nocardioides sp. (strain ATCC BAA-499 / JS614).